Consider the following 426-residue polypeptide: Elongation factor 1-alpha (426 aa).

The 217-residue stretch at 5-221 folds into the tr-type G domain; that stretch reads KPHINLAVIG…NALKEPEKPT (217 aa). A G1 region spans residues 14–21; the sequence is GHIDHGKS. 14–21 lines the GTP pocket; sequence GHIDHGKS. Position 21 (serine 21) interacts with Mg(2+). The interval 70–74 is G2; that stretch reads GITID. A G3 region spans residues 91–94; that stretch reads DCPG. Residues 91 to 95 and 146 to 149 each bind GTP; these read DCPGH and NKMD. Residues 146–149 are G4; that stretch reads NKMD. Positions 185-187 are G5; the sequence is SAF.

It belongs to the TRAFAC class translation factor GTPase superfamily. Classic translation factor GTPase family. EF-Tu/EF-1A subfamily.

It localises to the cytoplasm. It catalyses the reaction GTP + H2O = GDP + phosphate + H(+). Functionally, GTP hydrolase that promotes the GTP-dependent binding of aminoacyl-tRNA to the A-site of ribosomes during protein biosynthesis. This Methanocella arvoryzae (strain DSM 22066 / NBRC 105507 / MRE50) protein is Elongation factor 1-alpha.